Consider the following 328-residue polypeptide: Ankyrin repeat domain-containing protein 2 (328 aa).

Phosphoserine is present on Ser-36. At Ser-68 the chain carries Phosphoserine; by PKB/AKT2. Positions 96–116 (RDALAAAQEPPPEPEEITGPV) are disordered. ANK repeat units lie at residues 116 to 145 (VNEE…SADT), 149 to 178 (FRRT…TVDF), 182 to 211 (LDCT…DTNV), 215 to 244 (LLST…DINA), and 248 to 277 (EGDS…DMMA). The tract at residues 297-328 (RHALEHPEPESEQNGLERPGSGRETPQPIPAQ) is disordered.

Interacts with ID3; both proteins cooperate in myoblast differentiation. Interacts with TTN/titin. Interacts (via ANK repeats) with TCAP; the interaction is direct. Interacts with TJP1 (via PDZ domains). Interacts with PML; the interaction is direct. Interacts with p53/TP53. Interacts with YBX1. Interacts with AKT2. Phosphorylation at Ser-68 by PKB/AKT2 in response to oxidative stress induces translocation to the nucleus and negatively regulates myoblast differentiation. In terms of tissue distribution, expressed by myoblasts (at protein level). Expressed in skeletal and cardiac muscles.

Its subcellular location is the cytoplasm. It is found in the myofibril. The protein localises to the sarcomere. It localises to the i band. The protein resides in the cytosol. Its subcellular location is the nucleus. It is found in the PML body. In terms of biological role, functions as a negative regulator of myocyte differentiation. May interact with both sarcoplasmic structural proteins and nuclear proteins to regulate gene expression during muscle development and in response to muscle stress. The sequence is that of Ankyrin repeat domain-containing protein 2 (Ankrd2) from Mus musculus (Mouse).